A 215-amino-acid chain; its full sequence is uncharacterized protein (215 aa).

6 consecutive transmembrane segments (helical) span residues 21 to 40, 50 to 69, 95 to 117, 122 to 144, 157 to 179, and 185 to 207; these read IIKYIVIFFLFYIISTVLIN, LIFSVICLLISLISFSTIIF, FVAIFICTTVGLIFVLPVIYVFF, LEIALFFISVWMIFVLSSSLVVL, NFVGTFIMPLLIPNIIMTGLILQ, and LIFIMIGINLIFLPVSFCLSAYL.

This sequence belongs to the CcmB/CycW/HelB family.

Its subcellular location is the cell membrane. This is an uncharacterized protein from Rickettsia prowazekii (strain Madrid E).